The following is a 509-amino-acid chain: NADH dehydrogenase (509 aa).

Residues 1–183 form a membrane-binding region; it reads MVLDANIKAQ…YLNGESFGSG (183 aa). The catalytic stretch occupies residues 184-509; the sequence is RMTLEEILAK…LGAFDYLIRN (326 aa). 210–241 contacts FAD; that stretch reads DVLVVGGGPAGASAAIYTARKGIRTGVVAERF. An intrachain disulfide couples C337 to C340. An NAD(+)-binding site is contributed by 349-379; it reads DVAVIGGGNSGIEAAIDLAGIVNHVTVLEFA. Position 469-479 (469-479) interacts with FAD; sequence TSVPGLFAAGD.

This sequence belongs to the class-II pyridine nucleotide-disulfide oxidoreductase family. As to quaternary structure, homodimer. FAD is required as a cofactor.

It localises to the cell membrane. The enzyme catalyses a ubiquinone + NADH + 5 H(+)(in) = a ubiquinol + NAD(+) + 4 H(+)(out). Functionally, transfer of electrons from NADH to the respiratory chain. The immediate electron acceptor for the enzyme is believed to be ubiquinone. This Bacillus subtilis (strain 168) protein is NADH dehydrogenase (ahpF).